The chain runs to 434 residues: CBL-interacting protein kinase 15 (434 aa).

Residues 12-267 form the Protein kinase domain; it reads YELGRLLGKG…IQKIKESTWF (256 aa). Residues 18 to 26 and K41 each bind ATP; that span reads LGKGTFGKV. The active-site Proton acceptor is D135. An activation loop region spans residues 153 to 182; it reads DFGLSALSESKRQDGLLHTTCGTPAYVAPE. In terms of domain architecture, NAF spans 298-333; sequence RKKNAHEDVKPMSVTNLNAFEIISFSKGFDLSGMFI. Residues 338-367 are PPI; sequence RNEARFTSDKSASTIISKLEDVAKALNLRV.

Belongs to the protein kinase superfamily. CAMK Ser/Thr protein kinase family. SNF1 subfamily. It depends on Mn(2+) as a cofactor.

The catalysed reaction is L-seryl-[protein] + ATP = O-phospho-L-seryl-[protein] + ADP + H(+). It carries out the reaction L-threonyl-[protein] + ATP = O-phospho-L-threonyl-[protein] + ADP + H(+). In terms of biological role, involved in salt stress tolerance. CIPK serine-threonine protein kinases interact with CBL proteins. Binding of a CBL protein to the regulatory NAF domain of CIPK protein lead to the activation of the kinase in a calcium-dependent manner. The sequence is that of CBL-interacting protein kinase 15 (CIPK15) from Oryza sativa subsp. japonica (Rice).